The chain runs to 94 residues: UPF0235 protein TON_0641 (94 aa).

This sequence belongs to the UPF0235 family.

This chain is UPF0235 protein TON_0641, found in Thermococcus onnurineus (strain NA1).